Consider the following 460-residue polypeptide: V-type ATP synthase beta chain (460 aa).

This sequence belongs to the ATPase alpha/beta chains family.

Functionally, produces ATP from ADP in the presence of a proton gradient across the membrane. The V-type beta chain is a regulatory subunit. The chain is V-type ATP synthase beta chain from Clostridium perfringens (strain ATCC 13124 / DSM 756 / JCM 1290 / NCIMB 6125 / NCTC 8237 / Type A).